The sequence spans 70 residues: Envelope small membrane protein (70 aa).

The N-myristoyl glycine; by host moiety is linked to residue Gly-2. An endoplasmic reticulum retention signal region spans residues 2-15; that stretch reads GSLWSKISQLFVDA. Over 2–25 the chain is Virion surface; sequence GSLWSKISQLFVDAFTEFLVSVVD. The helical transmembrane segment at 26 to 46 threads the bilayer; sequence IAIFLAILFGFTVAGWLLVFL. Over 47 to 70 the chain is Intravirion; the sequence is LRVVCSALLRSRSAIHSPELSKVL.

This sequence belongs to the arteriviridae E protein family. As to quaternary structure, homooligomer. Associates with itself into higher-order structures, including dimers, trimers and tetramers. Associates with the GP2a-GP3-GP4 complex. Post-translationally, myristoylated. In terms of processing, not glycosylated.

Its subcellular location is the virion membrane. The protein localises to the host endoplasmic reticulum membrane. The protein resides in the host Golgi apparatus membrane. It is found in the secreted. In terms of biological role, minor envelope protein. May function as a viroporin in the virion envelope that facilitates uncoating of the virus in order to release the genomic RNA into the cytoplasm for subsequent replication. The polypeptide is Envelope small membrane protein (GP2b) (Sus scrofa (Pig)).